Reading from the N-terminus, the 67-residue chain is ATP synthase F(0) complex subunit 8 (67 aa).

Residues 8 to 24 traverse the membrane as a helical segment; the sequence is TWSITIMSMIMTLFIVF. K54 is subject to N6-acetyllysine; alternate. K54 carries the N6-succinyllysine; alternate modification. An N6-acetyllysine modification is found at K57.

Belongs to the ATPase protein 8 family. Component of the ATP synthase complex composed at least of ATP5F1A/subunit alpha, ATP5F1B/subunit beta, ATP5MC1/subunit c (homooctomer), MT-ATP6/subunit a, MT-ATP8/subunit 8, ATP5ME/subunit e, ATP5MF/subunit f, ATP5MG/subunit g, ATP5MK/subunit k, ATP5MJ/subunit j, ATP5F1C/subunit gamma, ATP5F1D/subunit delta, ATP5F1E/subunit epsilon, ATP5PF/subunit F6, ATP5PB/subunit b, ATP5PD/subunit d, ATP5PO/subunit OSCP. ATP synthase complex consists of a soluble F(1) head domain (subunits alpha(3) and beta(3)) - the catalytic core - and a membrane F(0) domain - the membrane proton channel (subunits c, a, 8, e, f, g, k and j). These two domains are linked by a central stalk (subunits gamma, delta, and epsilon) rotating inside the F1 region and a stationary peripheral stalk (subunits F6, b, d, and OSCP). Interacts with PRICKLE3.

Its subcellular location is the mitochondrion membrane. Its function is as follows. Subunit 8, of the mitochondrial membrane ATP synthase complex (F(1)F(0) ATP synthase or Complex V) that produces ATP from ADP in the presence of a proton gradient across the membrane which is generated by electron transport complexes of the respiratory chain. ATP synthase complex consist of a soluble F(1) head domain - the catalytic core - and a membrane F(1) domain - the membrane proton channel. These two domains are linked by a central stalk rotating inside the F(1) region and a stationary peripheral stalk. During catalysis, ATP synthesis in the catalytic domain of F(1) is coupled via a rotary mechanism of the central stalk subunits to proton translocation. In vivo, can only synthesize ATP although its ATP hydrolase activity can be activated artificially in vitro. Part of the complex F(0) domain. The chain is ATP synthase F(0) complex subunit 8 from Felis catus (Cat).